Consider the following 209-residue polypeptide: ATP-dependent Clp protease proteolytic subunit 1 (209 aa).

Serine 109 acts as the Nucleophile in catalysis. Histidine 134 is a catalytic residue.

Belongs to the peptidase S14 family. Fourteen ClpP subunits assemble into 2 heptameric rings which stack back to back to give a disk-like structure with a central cavity, resembling the structure of eukaryotic proteasomes.

It localises to the cytoplasm. It catalyses the reaction Hydrolysis of proteins to small peptides in the presence of ATP and magnesium. alpha-casein is the usual test substrate. In the absence of ATP, only oligopeptides shorter than five residues are hydrolyzed (such as succinyl-Leu-Tyr-|-NHMec, and Leu-Tyr-Leu-|-Tyr-Trp, in which cleavage of the -Tyr-|-Leu- and -Tyr-|-Trp bonds also occurs).. Functionally, cleaves peptides in various proteins in a process that requires ATP hydrolysis. Has a chymotrypsin-like activity. Plays a major role in the degradation of misfolded proteins. This is ATP-dependent Clp protease proteolytic subunit 1 from Corynebacterium diphtheriae (strain ATCC 700971 / NCTC 13129 / Biotype gravis).